Reading from the N-terminus, the 193-residue chain is Putative protein-glutamate methylesterase/protein-glutamine glutaminase (193 aa).

The region spanning 1–179 (MNYEAIVIGV…DYVLSLEKIA (179 aa)) is the CheB-type methylesterase domain. Residues S11, H38, and D131 contribute to the active site.

It belongs to the CheB family.

It localises to the cytoplasm. The catalysed reaction is [protein]-L-glutamate 5-O-methyl ester + H2O = L-glutamyl-[protein] + methanol + H(+). It carries out the reaction L-glutaminyl-[protein] + H2O = L-glutamyl-[protein] + NH4(+). In terms of biological role, may be involved in chemotaxis. The chain is Putative protein-glutamate methylesterase/protein-glutamine glutaminase (cheB2) from Leptospira interrogans serogroup Icterohaemorrhagiae serovar copenhageni (strain Fiocruz L1-130).